A 508-amino-acid chain; its full sequence is Light-independent protochlorophyllide reductase subunit B (508 aa).

Residue Asp36 coordinates [4Fe-4S] cluster. Asp294 (proton donor) is an active-site residue. 429-430 (GM) serves as a coordination point for substrate.

It belongs to the ChlB/BchB/BchZ family. Protochlorophyllide reductase is composed of three subunits; ChlL, ChlN and ChlB. Forms a heterotetramer of two ChlB and two ChlN subunits. [4Fe-4S] cluster is required as a cofactor.

It catalyses the reaction chlorophyllide a + oxidized 2[4Fe-4S]-[ferredoxin] + 2 ADP + 2 phosphate = protochlorophyllide a + reduced 2[4Fe-4S]-[ferredoxin] + 2 ATP + 2 H2O. The protein operates within porphyrin-containing compound metabolism; chlorophyll biosynthesis (light-independent). Functionally, component of the dark-operative protochlorophyllide reductase (DPOR) that uses Mg-ATP and reduced ferredoxin to reduce ring D of protochlorophyllide (Pchlide) to form chlorophyllide a (Chlide). This reaction is light-independent. The NB-protein (ChlN-ChlB) is the catalytic component of the complex. This Gloeothece citriformis (strain PCC 7424) (Cyanothece sp. (strain PCC 7424)) protein is Light-independent protochlorophyllide reductase subunit B.